The primary structure comprises 160 residues: MHSSLKTMAPAKLERLCVLSFFLFCATVFGTESLESLPEDKLILRGLKFYGFHGVLPEERELGGLFIVDINLWLSLKKAIESDNLADTVSFADTFRLVKKIVEGPPRNLYETVADDIASEMLETFPKINVIRVKFGKPNPSLVNSTVDFLGAELFRKRNH.

Residues Glu59, Phe91, and 110-111 (YE) each bind substrate. Lys137 (proton donor/acceptor) is an active-site residue.

The protein belongs to the DHNA family. In terms of assembly, homooctamer. Forms a hollow cylinder assembled from two ring-shaped tetramers. As to expression, expressed at very low levels in siliques.

It catalyses the reaction 7,8-dihydroneopterin = 6-hydroxymethyl-7,8-dihydropterin + glycolaldehyde. It functions in the pathway cofactor biosynthesis; tetrahydrofolate biosynthesis; 2-amino-4-hydroxy-6-hydroxymethyl-7,8-dihydropteridine diphosphate from 7,8-dihydroneopterin triphosphate: step 3/4. In terms of biological role, catalyzes the conversion of 7,8-dihydroneopterin into 6-hydroxymethyl-7,8-dihydropterin, a biosynthetic precursor of the vitamin tetrahydrofolate. Can use L-threo-dihydroneopterin and D-erythro-dihydroneopterin as substrates for the formation of 6-hydroxymethyldihydropterin, but it can also catalyze the epimerization of carbon 2' of dihydroneopterin and dihydromonapterin. The chain is Probable dihydroneopterin aldolase 3 from Arabidopsis thaliana (Mouse-ear cress).